The following is a 255-amino-acid chain: Probable ubiquitin carboxyl-terminal hydrolase (255 aa).

Residues 13–237 (NWIPLEANPE…IRFNLMGLVK (225 aa)) enclose the UCH catalytic domain. The interaction with ubiquitin stretch occupies residues 16-21 (PLEANP). Catalysis depends on C103, which acts as the Nucleophile. The active-site Proton donor is the H177. The interval 227-232 (EIRFNL) is interaction with ubiquitin. The segment at 235–255 (LVKKPNEESEEEEEKEKEETK) is disordered. Residues 242–255 (ESEEEEEKEKEETK) show a composition bias toward acidic residues.

It belongs to the peptidase C12 family.

Its subcellular location is the cytoplasm. The catalysed reaction is Thiol-dependent hydrolysis of ester, thioester, amide, peptide and isopeptide bonds formed by the C-terminal Gly of ubiquitin (a 76-residue protein attached to proteins as an intracellular targeting signal).. Functionally, ubiquitin-protein hydrolase is involved both in the processing of ubiquitin precursors and of ubiquitinated proteins. This enzyme is a thiol protease that recognizes and hydrolyzes a peptide bond at the C-terminal glycine of either ubiquitin or nedd8. This chain is Probable ubiquitin carboxyl-terminal hydrolase (uch1), found in Dictyostelium discoideum (Social amoeba).